Here is a 425-residue protein sequence, read N- to C-terminus: CinA-like protein (425 aa).

Belongs to the CinA family.

The chain is CinA-like protein from Mycobacterium marinum (strain ATCC BAA-535 / M).